A 185-amino-acid chain; its full sequence is Peptidyl-tRNA hydrolase (185 aa).

Phenylalanine 14 contacts tRNA. Histidine 19 functions as the Proton acceptor in the catalytic mechanism. Residues tyrosine 64, asparagine 66, and asparagine 112 each coordinate tRNA.

Belongs to the PTH family. As to quaternary structure, monomer.

It localises to the cytoplasm. The enzyme catalyses an N-acyl-L-alpha-aminoacyl-tRNA + H2O = an N-acyl-L-amino acid + a tRNA + H(+). Hydrolyzes ribosome-free peptidyl-tRNAs (with 1 or more amino acids incorporated), which drop off the ribosome during protein synthesis, or as a result of ribosome stalling. In terms of biological role, catalyzes the release of premature peptidyl moieties from peptidyl-tRNA molecules trapped in stalled 50S ribosomal subunits, and thus maintains levels of free tRNAs and 50S ribosomes. This is Peptidyl-tRNA hydrolase from Exiguobacterium sp. (strain ATCC BAA-1283 / AT1b).